We begin with the raw amino-acid sequence, 666 residues long: MEQEPQNGEPAEIKIIREAYKKAFLFVNKGLNTDELGQKEEAKNYYKQGIGHLLRGISISSKESEHTGPGWESARQMQQKMKETLQNVRTRLEILEKGLATSLQNDLQEVPKLYPEFPPKDMCEKLPEPQSFSSAPQHAEVNGNTSTPSAGAVAAPASLSLPSQSCPAEAPPAYTPQAAEGHYTVSYGTDSGEFSSVGEEFYRNHSQPPPLETLGLDADELILIPNGVQIFFVNPAGEVSAPSYPGYLRIVRFLDNSLDTVLNRPPGFLQVCDWLYPLVPDRSPVLKCTAGAYMFPDTMLQAAGCFVGVVLSSELPEDDRELFEDLLRQMSDLRLQANWNRAEEENEFQIPGRTRPSSDQLKEASGTDVKQLDQGNKDVRHKGKRGKRAKDTSSEEVNLSHIVPCEPVPEEKPKELPEWSEKVAHNILSGASWVSWGLVKGAEITGKAIQKGASKLRERIQPEEKPVEVSPAVTKGLYIAKQATGGAAKVSQFLVDGVCTVANCVGKELAPHVKKHGSKLVPESLKKDKDGKSPLDGAMVVAASSVQGFSTVWQGLECAAKCIVNNVSAETVQTVRYKYGYNAGEATHHAVDSAVNVGVTAYNINNIGIKAMVKKTATQTGHTLLEDYQIVDNSQRENQEGAANVNVRGEKDEQTKEVKEAKKKDK.

The residue at position 1 (Met-1) is an N-acetylmethionine. Positions 16–94 (IREAYKKAFL…LQNVRTRLEI (79 aa)) constitute an MIT domain. A disordered region spans residues 124-156 (EKLPEPQSFSSAPQHAEVNGNTSTPSAGAVAAP). The span at 146-156 (STPSAGAVAAP) shows a compositional bias: low complexity. Residues 190-380 (DSGEFSSVGE…QLDQGNKDVR (191 aa)) are ubiquitin-binding region (UBR) domain. The LC3-interacting region (LIR); mediates interaction with MAP1LC3A AND MAP1LC3C motif lies at 193 to 200 (EFSSVGEE). The tract at residues 344–398 (EENEFQIPGRTRPSSDQLKEASGTDVKQLDQGNKDVRHKGKRGKRAKDTSSEEVN) is disordered. Lys-362 is covalently cross-linked (Glycyl lysine isopeptide (Lys-Gly) (interchain with G-Cter in ubiquitin)). Residues 379–388 (VRHKGKRGKR) show a composition bias toward basic residues. Residues 427-611 (ILSGASWVSW…YNINNIGIKA (185 aa)) form the Senescence domain. The required for localization to lipid droplets stretch occupies residues 431-503 (ASWVSWGLVK…LVDGVCTVAN (73 aa)). Ser-470 carries the phosphoserine modification. A disordered region spans residues 636–666 (RENQEGAANVNVRGEKDEQTKEVKEAKKKDK). Over residues 648-666 (RGEKDEQTKEVKEAKKKDK) the composition is skewed to basic and acidic residues.

Interacts with ITCH and WWP1. Interacts (via MIT domain) with IST1; leading to the recruitment of SPART to midbodies. Interacts with MAP1LC3A and MAP1LC3C. Ubiquitinated; ubiquitination does not require ITCH and WWP1. As to expression, ubiquitously expressed, with highest levels of expression detected in adipose tissue.

The protein resides in the cytoplasm. It localises to the midbody. The protein localises to the lipid droplet. In terms of biological role, lipophagy receptor that plays an important role in lipid droplet (LD) turnover in motor neurons. Localizes to LDs and interacts with components of the autophagy machinery, such as MAP1LC3A/C proteins to deliver LDs to autophagosomes for degradation via lipophagy. Lipid transfer protein required for lipid droplet degradation, including by lipophagy. Can bind and transfer all lipid species found in lipid droplets, from phospholipids to triglycerides and sterol esters but the direction of lipid transfer by spartin and its cargos are unknown. May be implicated in endosomal trafficking, or microtubule dynamics, or both. Participates in cytokinesis. The protein is Spartin of Homo sapiens (Human).